Here is a 121-residue protein sequence, read N- to C-terminus: Large ribosomal subunit protein uL18 (121 aa).

It belongs to the universal ribosomal protein uL18 family. As to quaternary structure, part of the 50S ribosomal subunit; part of the 5S rRNA/L5/L18/L25 subcomplex. Contacts the 5S and 23S rRNAs.

Its function is as follows. This is one of the proteins that bind and probably mediate the attachment of the 5S RNA into the large ribosomal subunit, where it forms part of the central protuberance. The polypeptide is Large ribosomal subunit protein uL18 (Herpetosiphon aurantiacus (strain ATCC 23779 / DSM 785 / 114-95)).